Reading from the N-terminus, the 261-residue chain is MAVGKNKRISKGKKGGKKKAADPFAKKDWYDIKAPSVFSVRNVGKTLVTRTQGTKIASEGLEHRVFEISLADLQGDEDHSFRKIRLRAEDIQGKNVLTNFWGMDFTTDKLRSLVRKWQSLIEAHVDVKTTDSYTLRMFCIGFTKKRANQQKRTCYAQSSQIRQIRRKMREIMVNQAQSCDLKDLVQKFIPESIGREIEKATSSIYPLQNVFIRKVKILKAPKFDLGKLMEVHGDYNEDDIGTKLDRPAEEAVAEPTEVIGA.

The span at 1–18 (MAVGKNKRISKGKKGGKK) shows a compositional bias: basic residues. The interval 1–20 (MAVGKNKRISKGKKGGKKKA) is disordered.

This sequence belongs to the eukaryotic ribosomal protein eS1 family. As to quaternary structure, component of the small ribosomal subunit. Mature ribosomes consist of a small (40S) and a large (60S) subunit. The 40S subunit contains about 33 different proteins and 1 molecule of RNA (18S). The 60S subunit contains about 49 different proteins and 3 molecules of RNA (25S, 5.8S and 5S).

It is found in the cytoplasm. In Catharanthus roseus (Madagascar periwinkle), this protein is Small ribosomal subunit protein eS1.